A 180-amino-acid chain; its full sequence is NADH-quinone oxidoreductase subunit I (180 aa).

4Fe-4S ferredoxin-type domains are found at residues 50–80 and 90–119; these read LTRN…LQKS and KFFR…LMPD. Residues Cys60, Cys63, Cys66, Cys70, Cys99, Cys102, Cys105, and Cys109 each contribute to the [4Fe-4S] cluster site.

This sequence belongs to the complex I 23 kDa subunit family. NDH-1 is composed of 13 different subunits. Subunits NuoA, H, J, K, L, M, N constitute the membrane sector of the complex. [4Fe-4S] cluster is required as a cofactor.

It is found in the cell membrane. It catalyses the reaction a quinone + NADH + 5 H(+)(in) = a quinol + NAD(+) + 4 H(+)(out). NDH-1 shuttles electrons from NADH, via FMN and iron-sulfur (Fe-S) centers, to quinones in the respiratory chain. The immediate electron acceptor for the enzyme in this species is believed to be ubiquinone. Couples the redox reaction to proton translocation (for every two electrons transferred, four hydrogen ions are translocated across the cytoplasmic membrane), and thus conserves the redox energy in a proton gradient. In Buchnera aphidicola subsp. Acyrthosiphon pisum (strain APS) (Acyrthosiphon pisum symbiotic bacterium), this protein is NADH-quinone oxidoreductase subunit I.